A 265-amino-acid chain; its full sequence is 1-(5-phosphoribosyl)-5-[(5-phosphoribosylamino)methylideneamino] imidazole-4-carboxamide isomerase (265 aa).

Aspartate 8 functions as the Proton acceptor in the catalytic mechanism. Aspartate 139 acts as the Proton donor in catalysis.

Belongs to the HisA/HisF family.

Its subcellular location is the cytoplasm. It catalyses the reaction 1-(5-phospho-beta-D-ribosyl)-5-[(5-phospho-beta-D-ribosylamino)methylideneamino]imidazole-4-carboxamide = 5-[(5-phospho-1-deoxy-D-ribulos-1-ylimino)methylamino]-1-(5-phospho-beta-D-ribosyl)imidazole-4-carboxamide. The protein operates within amino-acid biosynthesis; L-histidine biosynthesis; L-histidine from 5-phospho-alpha-D-ribose 1-diphosphate: step 4/9. This Herminiimonas arsenicoxydans protein is 1-(5-phosphoribosyl)-5-[(5-phosphoribosylamino)methylideneamino] imidazole-4-carboxamide isomerase.